Consider the following 96-residue polypeptide: Large ribosomal subunit protein bL27 (96 aa).

A propeptide spanning residues 1–9 (MLRLDLQFF) is cleaved from the precursor.

Belongs to the bacterial ribosomal protein bL27 family. Post-translationally, the N-terminus is cleaved by ribosomal processing cysteine protease Prp.

The protein is Large ribosomal subunit protein bL27 of Anoxybacillus flavithermus (strain DSM 21510 / WK1).